A 541-amino-acid polypeptide reads, in one-letter code: 3-oxoacyl-[acyl-carrier-protein] synthase II, chloroplastic (541 aa).

A chloroplast-targeting transit peptide spans 1-103; the sequence is MVGASSSYAS…NRNQRRLNRA (103 aa). The 411-residue stretch at 129–539 folds into the Ketosynthase family 3 (KS3) domain; it reads QRRVVVTGMG…GHNSSIIFAP (411 aa). Catalysis depends on for beta-ketoacyl synthase activity residues C292, H432, and H468.

The protein belongs to the thiolase-like superfamily. Beta-ketoacyl-ACP synthases family. As to quaternary structure, homodimer. As to expression, mostly expressed in siliques, and, to a lower extent, in leaves, stems, flower buds, and flowers.

The protein localises to the plastid. It localises to the chloroplast stroma. The enzyme catalyses a fatty acyl-[ACP] + malonyl-[ACP] + H(+) = a 3-oxoacyl-[ACP] + holo-[ACP] + CO2. In terms of biological role, essential protein that catalyzes the condensation reaction of fatty acid synthesis by the addition to an acyl acceptor of two carbons from malonyl-ACP. Specific for elongation from C-16 and C-16 to unsaturated C-18 fatty acids. Confers resistance to low temperatures by maintaining chloroplast membranes integrity. Involved in the regulation of fatty acids ratios during seed metabolism. Required for embryo development, especially at the transition from the globular to the heart stage. In Arabidopsis thaliana (Mouse-ear cress), this protein is 3-oxoacyl-[acyl-carrier-protein] synthase II, chloroplastic (KAS2).